The chain runs to 170 residues: Peptide deformylase (170 aa).

Fe cation-binding residues include C93 and H135. Residue E136 is part of the active site. A Fe cation-binding site is contributed by H139.

This sequence belongs to the polypeptide deformylase family. Fe(2+) is required as a cofactor.

It catalyses the reaction N-terminal N-formyl-L-methionyl-[peptide] + H2O = N-terminal L-methionyl-[peptide] + formate. Removes the formyl group from the N-terminal Met of newly synthesized proteins. Requires at least a dipeptide for an efficient rate of reaction. N-terminal L-methionine is a prerequisite for activity but the enzyme has broad specificity at other positions. The chain is Peptide deformylase from Syntrophobacter fumaroxidans (strain DSM 10017 / MPOB).